A 434-amino-acid polypeptide reads, in one-letter code: Nicotinate phosphoribosyltransferase (434 aa).

Residue His242 is modified to Phosphohistidine; by autocatalysis.

This sequence belongs to the NAPRTase family. Transiently phosphorylated on a His residue during the reaction cycle. Phosphorylation strongly increases the affinity for substrates and increases the rate of nicotinate D-ribonucleotide production. Dephosphorylation regenerates the low-affinity form of the enzyme, leading to product release.

It carries out the reaction nicotinate + 5-phospho-alpha-D-ribose 1-diphosphate + ATP + H2O = nicotinate beta-D-ribonucleotide + ADP + phosphate + diphosphate. It participates in cofactor biosynthesis; NAD(+) biosynthesis; nicotinate D-ribonucleotide from nicotinate: step 1/1. Functionally, catalyzes the synthesis of beta-nicotinate D-ribonucleotide from nicotinate and 5-phospho-D-ribose 1-phosphate at the expense of ATP. This chain is Nicotinate phosphoribosyltransferase, found in Bradyrhizobium diazoefficiens (strain JCM 10833 / BCRC 13528 / IAM 13628 / NBRC 14792 / USDA 110).